Consider the following 97-residue polypeptide: Putative membrane protein insertion efficiency factor (97 aa).

The interval 77–97 is disordered; that stretch reads VPDAPASPSPSSSCSCKGPHP. The segment covering 85 to 97 has biased composition (low complexity); it reads SPSSSCSCKGPHP.

It belongs to the UPF0161 family.

The protein localises to the cell inner membrane. In terms of biological role, could be involved in insertion of integral membrane proteins into the membrane. This Xanthomonas euvesicatoria pv. vesicatoria (strain 85-10) (Xanthomonas campestris pv. vesicatoria) protein is Putative membrane protein insertion efficiency factor.